Reading from the N-terminus, the 266-residue chain is Gap junction beta-4 protein (266 aa).

The stretch at 2 to 13 is an intramembrane region; the sequence is NWGFLQGILSGV. The Cytoplasmic portion of the chain corresponds to 14–20; the sequence is NKYSTAL. A helical membrane pass occupies residues 21-40; it reads GRIWLSVVFIFRVLVYVVAA. Residues 41 to 73 are Extracellular-facing; the sequence is EEVWDDDQKDFICNTKQPGCPNVCYDEFFPVSH. 3 disulfide bridges follow: Cys-53–Cys-175, Cys-60–Cys-169, and Cys-64–Cys-164. A helical membrane pass occupies residues 74 to 94; that stretch reads VRLWALQLILVTCPSLLVVMH. Residues 95 to 130 are Cytoplasmic-facing; that stretch reads VAYREERERKHRLKHGPNAPALYSNLSKKRGGLWWT. A helical transmembrane segment spans residues 131–151; sequence YLLSLIFKAAVDSGFLYIFHC. Residues 152 to 184 are Extracellular-facing; sequence IYKDYDMPRVVACSVTPCPHTVDCYIARPTEKK. Residues 185–205 traverse the membrane as a helical segment; sequence VFTYFMVVTAAICILLNLSEV. Over 206–266 the chain is Cytoplasmic; that stretch reads VYLVGKRCME…MATVDAGVYP (61 aa).

The protein belongs to the connexin family. Beta-type (group I) subfamily. A hemichannel or connexon is composed of a hexamer of connexins. A functional gap junction is formed by the apposition of two hemichannels. Forms heteromeric channels with GJB2. As to expression, detected in cochlea (at protein level). Detected in cochlea. Expressed in skin.

The protein resides in the cell membrane. Its subcellular location is the cell junction. The protein localises to the gap junction. In terms of biological role, structural component of gap junctions. Gap junctions are dodecameric channels that connect the cytoplasm of adjoining cells. They are formed by the docking of two hexameric hemichannels, one from each cell membrane. Small molecules and ions diffuse from one cell to a neighboring cell via the central pore. The chain is Gap junction beta-4 protein (Gjb4) from Mus musculus (Mouse).